Reading from the N-terminus, the 659-residue chain is Cysteine-rich receptor-like protein kinase 7 (659 aa).

The N-terminal stretch at 1 to 23 is a signal peptide; the sequence is MSSLFPFIFLFLFSFLTSFRASA. The Extracellular portion of the chain corresponds to 24 to 273; the sequence is QDPRFLAYYC…SLSDKSGNSN (250 aa). Gnk2-homologous domains lie at 27–131 and 142–244; these read RFLA…HKNI and FILR…LYDF. 5 N-linked (GlcNAc...) asparagine glycosylation sites follow: Asn-35, Asn-42, Asn-60, Asn-69, and Asn-103. Asn-246 is a glycosylation site (N-linked (GlcNAc...) asparagine). Residues 274 to 294 form a helical membrane-spanning segment; sequence VVVVAVVVPIIVAVLIFIAGY. Residues 295-659 are Cytoplasmic-facing; the sequence is CFFAKRAKKT…DKSMSDLDPR (365 aa). The Protein kinase domain maps to 336-622; it reads FSENNKIGRG…ALPAPQQPGF (287 aa). Residues 342–350 and Lys-364 contribute to the ATP site; that span reads IGRGGFGDV. Residue Tyr-409 is modified to Phosphotyrosine. Asp-461 serves as the catalytic Proton acceptor. Ser-465 carries the phosphoserine modification. The residue at position 501 (Thr-501) is a Phosphothreonine. Tyr-509 carries the post-translational modification Phosphotyrosine. The segment at 626–659 is disordered; the sequence is SRPGTNRLDSDQSTTNKSVTVSIDDKSMSDLDPR. Positions 636 to 646 are enriched in polar residues; sequence DQSTTNKSVTV. A compositionally biased stretch (basic and acidic residues) spans 648-659; it reads IDDKSMSDLDPR.

It belongs to the protein kinase superfamily. Ser/Thr protein kinase family. CRK subfamily.

It localises to the membrane. The enzyme catalyses L-seryl-[protein] + ATP = O-phospho-L-seryl-[protein] + ADP + H(+). It carries out the reaction L-threonyl-[protein] + ATP = O-phospho-L-threonyl-[protein] + ADP + H(+). The sequence is that of Cysteine-rich receptor-like protein kinase 7 (CRK7) from Arabidopsis thaliana (Mouse-ear cress).